Here is a 120-residue protein sequence, read N- to C-terminus: NAD(P)H-quinone oxidoreductase subunit 3, chloroplastic (120 aa).

The next 3 membrane-spanning stretches (helical) occupy residues 10–30 (LWFFLVIASIVPILAFTISEI), 64–84 (MFALVFVVFDVETVFLYPWAI), and 89–109 (LGISAFIEALLFILILMVGLV).

The protein belongs to the complex I subunit 3 family. NDH is composed of at least 16 different subunits, 5 of which are encoded in the nucleus.

The protein localises to the plastid. Its subcellular location is the chloroplast thylakoid membrane. The enzyme catalyses a plastoquinone + NADH + (n+1) H(+)(in) = a plastoquinol + NAD(+) + n H(+)(out). It catalyses the reaction a plastoquinone + NADPH + (n+1) H(+)(in) = a plastoquinol + NADP(+) + n H(+)(out). NDH shuttles electrons from NAD(P)H:plastoquinone, via FMN and iron-sulfur (Fe-S) centers, to quinones in the photosynthetic chain and possibly in a chloroplast respiratory chain. The immediate electron acceptor for the enzyme in this species is believed to be plastoquinone. Couples the redox reaction to proton translocation, and thus conserves the redox energy in a proton gradient. The chain is NAD(P)H-quinone oxidoreductase subunit 3, chloroplastic from Chara vulgaris (Common stonewort).